We begin with the raw amino-acid sequence, 376 residues long: Carbamoyl phosphate synthase small chain (376 aa).

Residues 1 to 187 are CPSase; the sequence is MKALLVLEDG…AEDGSYAWRG (187 aa). L-glutamine-binding residues include S45, G239, and G241. The 186-residue stretch at 191–376 folds into the Glutamine amidotransferase type-1 domain; that stretch reads PLLVYDFGIK…RKIIGESAGA (186 aa). The Nucleophile role is filled by C266. Residues L267, Q270, N308, G310, and F311 each coordinate L-glutamine. Residues H349 and E351 contribute to the active site.

Belongs to the CarA family. Composed of two chains; the small (or glutamine) chain promotes the hydrolysis of glutamine to ammonia, which is used by the large (or ammonia) chain to synthesize carbamoyl phosphate. Tetramer of heterodimers (alpha,beta)4.

It catalyses the reaction hydrogencarbonate + L-glutamine + 2 ATP + H2O = carbamoyl phosphate + L-glutamate + 2 ADP + phosphate + 2 H(+). The catalysed reaction is L-glutamine + H2O = L-glutamate + NH4(+). It participates in amino-acid biosynthesis; L-arginine biosynthesis; carbamoyl phosphate from bicarbonate: step 1/1. The protein operates within pyrimidine metabolism; UMP biosynthesis via de novo pathway; (S)-dihydroorotate from bicarbonate: step 1/3. Functionally, small subunit of the glutamine-dependent carbamoyl phosphate synthetase (CPSase). CPSase catalyzes the formation of carbamoyl phosphate from the ammonia moiety of glutamine, carbonate, and phosphate donated by ATP, constituting the first step of 2 biosynthetic pathways, one leading to arginine and/or urea and the other to pyrimidine nucleotides. The small subunit (glutamine amidotransferase) binds and cleaves glutamine to supply the large subunit with the substrate ammonia. The chain is Carbamoyl phosphate synthase small chain from Desulfovibrio desulfuricans (strain ATCC 27774 / DSM 6949 / MB).